Here is an 856-residue protein sequence, read N- to C-terminus: TPR repeat-containing protein TP_0123 (856 aa).

TPR repeat units follow at residues 107–140 (YAAVRCVRALYQTLDTYEKQVKEFRILMDVVADD), 523–556 (YRTFSLLGFLTIGQSKFEDALVYFGYALDDAEQL), and 603–636 (TVSLFMQGRISLSLGEYAQARRCFDEAADFALQY).

The sequence is that of TPR repeat-containing protein TP_0123 from Treponema pallidum (strain Nichols).